Consider the following 196-residue polypeptide: ATP-dependent Clp protease proteolytic subunit (196 aa).

Catalysis depends on Ser101, which acts as the Nucleophile. His126 is an active-site residue.

It belongs to the peptidase S14 family. Component of the chloroplastic Clp protease core complex.

Its subcellular location is the plastid. The protein resides in the chloroplast stroma. The catalysed reaction is Hydrolysis of proteins to small peptides in the presence of ATP and magnesium. alpha-casein is the usual test substrate. In the absence of ATP, only oligopeptides shorter than five residues are hydrolyzed (such as succinyl-Leu-Tyr-|-NHMec, and Leu-Tyr-Leu-|-Tyr-Trp, in which cleavage of the -Tyr-|-Leu- and -Tyr-|-Trp bonds also occurs).. Its function is as follows. Cleaves peptides in various proteins in a process that requires ATP hydrolysis. Has a chymotrypsin-like activity. Plays a major role in the degradation of misfolded proteins. The chain is ATP-dependent Clp protease proteolytic subunit from Barbarea verna (Land cress).